Reading from the N-terminus, the 1612-residue chain is Phospholipid-transporting ATPase DNF2 (1612 aa).

The tract at residues 1–74 (MSSPSKPTSP…MKDISTPDLS (74 aa)) is disordered. At 1–252 (MSSPSKPTSP…TFFPKNILFQ (252 aa)) the chain is on the cytoplasmic side. The span at 20-30 (GSASNGLSSMS) shows a compositional bias: low complexity. At T70 the chain carries Phosphothreonine. Position 85 is a phosphoserine (S85). Residues 253–273 (FHNFANIYFLILLILGAFQIF) traverse the membrane as a helical segment. The involved in phosphatidylcholine substrate selection stretch occupies residues 272–279 (IFGVTNPG). Residues 274-277 (GVTN) are Extracellular-facing. A helical transmembrane segment spans residues 278-298 (PGFASVPLIVIVIITAIKDGI). The Cytoplasmic segment spans residues 299–598 (EDSRRTVLDL…RISRELNFSV (300 aa)). The segment covering 364-373 (KLQKKREELR) has biased composition (basic and acidic residues). Residues 364 to 384 (KLQKKREELRRKRNSRSFGPR) are disordered. Phosphoserine occurs at positions 389, 392, 396, and 403. Y406 is modified (phosphotyrosine). A helical transmembrane segment spans residues 599-619 (ILNFVLLFILCFTAGIVNGVY). Over 620–639 (YKQKPRSRDYFEFGTIGGSA) the chain is Extracellular. The interval 631–635 (EFGTI) is involved in phosphatidylcholine substrate selection. The chain crosses the membrane as a helical span at residues 640-660 (STNGFVSFWVAVILYQSLVPI). At 661–1231 (SLYISVEIIK…WCYKRLAEMI (571 aa)) the chain is on the cytoplasmic side. D712 serves as the catalytic 4-aspartylphosphate intermediate. ATP is bound by residues D712, K713, and T714. Residue D712 coordinates Mg(2+). T714 serves as a coordination point for Mg(2+). T782 carries the phosphothreonine modification. E846, F887, S889, K892, and K916 together coordinate ATP. Residue K938 forms a Glycyl lysine isopeptide (Lys-Gly) (interchain with G-Cter in ubiquitin) linkage. ATP contacts are provided by R952, T953, T1032, G1033, D1034, R1147, and K1153. D1173 lines the Mg(2+) pocket. Residues N1176 and D1177 each coordinate ATP. Residue D1177 participates in Mg(2+) binding. A helical membrane pass occupies residues 1232–1252 (PQFFYKNVIFTLSLFWYGIYN). At 1253–1262 (NFDGSYLFEY) the chain is on the extracellular side. The helical transmembrane segment at 1263 to 1283 (TYLTFYNLAFTSVPVILLAVL) threads the bilayer. Over 1284 to 1313 (DQDVSDTVSMLVPQLYRVGILRKEWNQTKF) the chain is Cytoplasmic. Residues 1314–1334 (LWYMLDGVYQSVICFFFPYLA) form a helical membrane-spanning segment. The Extracellular portion of the chain corresponds to 1335-1350 (YHKNMVVTENGLGLDH). Residues 1351 to 1371 (RYFVGVFVTAIAVTSCNFYVF) traverse the membrane as a helical segment. Residues 1372 to 1377 (MEQYRW) lie on the Cytoplasmic side of the membrane. Residues 1378-1398 (DWFCGLFICLSLAVFYGWTGI) form a helical membrane-spanning segment. Over 1399–1418 (WTSSSSSNEFYKGAARVFAQ) the chain is Extracellular. Residues 1419–1439 (PAYWAVLFVGVLFCLLPRFTI) traverse the membrane as a helical segment. R1436 provides a ligand contact to a 1,2-diacyl-sn-glycero-3-phospho-L-serine. Residues 1440–1612 (DCIRKIFYPK…TLLSQRSRDR (173 aa)) are Cytoplasmic-facing. At S1542 the chain carries Phosphoserine. The disordered stretch occupies residues 1544-1563 (VTTTNNLPRRSMASARGNKL). S1592 bears the Phosphoserine mark.

It belongs to the cation transport ATPase (P-type) (TC 3.A.3) family. Type IV subfamily. In terms of assembly, component of a flippase complex consisting of DNF1 and LEM3. Interacts with LEM3; the interaction is direct. Mg(2+) is required as a cofactor. Post-translationally, phosphorylated by FPK1 and KIN82.

It is found in the cell membrane. It carries out the reaction ATP + H2O + phospholipidSide 1 = ADP + phosphate + phospholipidSide 2.. The catalysed reaction is a 1,2-diacyl-sn-glycero-3-phosphoethanolamine(out) + ATP + H2O = a 1,2-diacyl-sn-glycero-3-phosphoethanolamine(in) + ADP + phosphate + H(+). The enzyme catalyses a 1,2-diacyl-sn-glycero-3-phosphocholine(out) + ATP + H2O = a 1,2-diacyl-sn-glycero-3-phosphocholine(in) + ADP + phosphate + H(+). It catalyses the reaction a beta-D-glucosyl-(1&lt;-&gt;1')-N-acylsphing-4-enine(out) + ATP + H2O = a beta-D-glucosyl-(1&lt;-&gt;1')-N-acylsphing-4-enine(in) + ADP + phosphate + H(+). It carries out the reaction a 1,2-diacyl-sn-glycero-3-phospho-L-serine(out) + ATP + H2O = a 1,2-diacyl-sn-glycero-3-phospho-L-serine(in) + ADP + phosphate + H(+). Its activity is regulated as follows. Phosphatidylcholine flippase activity is inhibited by glucosylsphingosine, lactosylsphingosine, lysophosphatidylcholine and to a lesser degree sphingosine-1-phosphate and lysosphingomyelin. Glucosylceramide flippase activity is inhibited by lysophosphatidylcholine, glucosylsphingosine and to a lesser degree lactosylsphingosine whereas lysosphingomyelin has a stimulatory effect at low concentrations. Catalytic component of a P4-ATPase flippase complex which catalyzes the hydrolysis of ATP coupled to the transport of glucosylceramide, phosphatidylcholine, phosphatidylethanolamine, and small amounts of phosphatidylserine from the lumenal to the cytosolic leaflet of the cell membrane and ensures the maintenance of asymmetric distribution of phospholipids. Does not appear to transport sphingomyelin, inositol phosphoceramide or phosphatidic acid. Required for efficient endocytosis. Required for protein transport from Golgi to vacuoles. The polypeptide is Phospholipid-transporting ATPase DNF2 (DNF2) (Saccharomyces cerevisiae (strain ATCC 204508 / S288c) (Baker's yeast)).